The sequence spans 119 residues: Ribonuclease P protein component (119 aa).

This sequence belongs to the RnpA family. As to quaternary structure, consists of a catalytic RNA component (M1 or rnpB) and a protein subunit.

The catalysed reaction is Endonucleolytic cleavage of RNA, removing 5'-extranucleotides from tRNA precursor.. Its function is as follows. RNaseP catalyzes the removal of the 5'-leader sequence from pre-tRNA to produce the mature 5'-terminus. It can also cleave other RNA substrates such as 4.5S RNA. The protein component plays an auxiliary but essential role in vivo by binding to the 5'-leader sequence and broadening the substrate specificity of the ribozyme. The protein is Ribonuclease P protein component of Clostridium acetobutylicum (strain ATCC 824 / DSM 792 / JCM 1419 / IAM 19013 / LMG 5710 / NBRC 13948 / NRRL B-527 / VKM B-1787 / 2291 / W).